Consider the following 59-residue polypeptide: UPF0434 protein lpl1884 (59 aa).

It belongs to the UPF0434 family.

The chain is UPF0434 protein lpl1884 from Legionella pneumophila (strain Lens).